A 366-amino-acid polypeptide reads, in one-letter code: Galactoside alpha-(1,2)-fucosyltransferase 1 (366 aa).

At 1–8 (MWPPSHRQ) the chain is on the cytoplasmic side. Residues 9–25 (LCRAFLLVCVFSVISFF) traverse the membrane as a helical; Signal-anchor for type II membrane protein segment. At 26 to 366 (LHIHQDSFPH…LSPLWTLAKP (341 aa)) the chain is on the lumenal side. N-linked (GlcNAc...) asparagine glycans are attached at residues Asn66, Asn302, and Asn328.

This sequence belongs to the glycosyltransferase 11 family.

Its subcellular location is the golgi apparatus. The protein localises to the golgi stack membrane. The enzyme catalyses a beta-D-galactosyl-(1-&gt;4)-N-acetyl-beta-D-glucosaminyl derivative + GDP-beta-L-fucose = an alpha-L-Fuc-(1-&gt;2)-beta-D-Gal-(1-&gt;4)-beta-D-GlcNAc derivative + GDP + H(+). It catalyses the reaction a ganglioside GA1 + GDP-beta-L-fucose = a ganglioside Fuc-GA1 + GDP + H(+). It carries out the reaction a beta-D-Gal-(1-&gt;3)-beta-D-GlcNAc-(1-&gt;3)-beta-D-Gal-(1-&gt;4)-beta-D-Glc-(1&lt;-&gt;1')-Cer(d18:1(4E)) + GDP-beta-L-fucose = alpha-L-fucosyl-(1-&gt;2)- beta-D-galactosyl-(1-&gt;3)-N-acetyl-beta-D-glucosaminyl-(1-&gt;3)-beta-D-galactosyl-(1-&gt;4)-beta-D-glucosyl-(1&lt;-&gt;1')-N-acylsphing-4-enine + GDP + H(+). The catalysed reaction is a neolactoside nLc4Cer(d18:1(4E)) + GDP-beta-L-fucose = a neolactoside IV(2)-alpha-Fuc-nLc4Cer(d18:1(4E)) + GDP + H(+). The enzyme catalyses a ganglioside GM1 + GDP-beta-L-fucose = a ganglioside Fuc-GM1 + GDP + H(+). It catalyses the reaction beta-D-galactosyl-(1-&gt;3)-N-acetyl-D-galactosamine + GDP-beta-L-fucose = alpha-L-fucosyl-(1-&gt;2)-beta-D-galactosyl-(1-&gt;3)-N-acetyl-D-galactosamine + GDP + H(+). The protein operates within protein modification; protein glycosylation. In terms of biological role, catalyzes the transfer of L-fucose, from a guanosine diphosphate-beta-L-fucose, to the terminal galactose residue of glycoconjugates through an alpha(1,2) linkage leading to H antigen synthesis that is an intermediate substrate in the synthesis of ABO blood group antigens. H antigen is essential for maturation of the glomerular layer of the main olfactory bulb, in cell migration and early cell-cell contacts during tumor associated angiogenesis. Preferentially fucosylates soluble lactose and to a lesser extent fucosylates glycolipids gangliosides GA1 and GM1a. This Gorilla gorilla gorilla (Western lowland gorilla) protein is Galactoside alpha-(1,2)-fucosyltransferase 1.